The primary structure comprises 243 residues: NAD-dependent protein deacylase (243 aa).

In terms of domain architecture, Deacetylase sirtuin-type spans 1-234 (MYQHIVVLTG…PKLVDTILAG (234 aa)). 10–29 (GAGISAESGLRTFRDQDGLW) is a binding site for NAD(+). Substrate-binding residues include Y54 and R57. 91–94 (QNID) contributes to the NAD(+) binding site. Residue H109 is the Proton acceptor of the active site. Zn(2+) contacts are provided by C117 and C136. NAD(+)-binding positions include 176-178 (GTS), 202-204 (NLQ), and A220.

The protein belongs to the sirtuin family. Class III subfamily. The cofactor is Zn(2+).

Its subcellular location is the cytoplasm. The catalysed reaction is N(6)-acetyl-L-lysyl-[protein] + NAD(+) + H2O = 2''-O-acetyl-ADP-D-ribose + nicotinamide + L-lysyl-[protein]. It carries out the reaction N(6)-succinyl-L-lysyl-[protein] + NAD(+) + H2O = 2''-O-succinyl-ADP-D-ribose + nicotinamide + L-lysyl-[protein]. NAD-dependent lysine deacetylase and desuccinylase that specifically removes acetyl and succinyl groups on target proteins. Modulates the activities of several proteins which are inactive in their acylated form. The chain is NAD-dependent protein deacylase from Shewanella oneidensis (strain ATCC 700550 / JCM 31522 / CIP 106686 / LMG 19005 / NCIMB 14063 / MR-1).